The following is a 501-amino-acid chain: COP9 signalosome complex subunit 3 (501 aa).

In terms of domain architecture, PCI spans Arg275–Pro445.

This sequence belongs to the CSN3 family. In terms of assembly, component of the CSN complex, probably composed of csn-1, csn-2, csn-3, csn-4, csn-5, csn-6 and csn-7. Within the complex it probably interacts directly with csn-2 and csn-4. May interact with itself.

It localises to the cytoplasm. Its subcellular location is the nucleus. In terms of biological role, component of the COP9 signalosome complex (CSN), a complex involved in various cellular and developmental processes. The CSN complex is an essential regulator of the ubiquitin (Ubl) conjugation pathway by mediating the deneddylation of the cullin subunits of the SCF-type E3 ligase complexes, leading to decrease the Ubl ligase activity of SCF. The CSN complex plays an essential role in embryogenesis and oogenesis and is required to regulate microtubule stability in the early embryo. Mediates mei-3/katanin targeting for degradation at the meiosis to mitosis transition via deneddylation of cul-3. The sequence is that of COP9 signalosome complex subunit 3 (csn-3) from Caenorhabditis elegans.